Here is a 344-residue protein sequence, read N- to C-terminus: Protein RecA (344 aa).

G65–T72 serves as a coordination point for ATP. The span at E323–A337 shows a compositional bias: basic and acidic residues. The interval E323–E344 is disordered.

This sequence belongs to the RecA family.

It is found in the cytoplasm. Its function is as follows. Can catalyze the hydrolysis of ATP in the presence of single-stranded DNA, the ATP-dependent uptake of single-stranded DNA by duplex DNA, and the ATP-dependent hybridization of homologous single-stranded DNAs. It interacts with LexA causing its activation and leading to its autocatalytic cleavage. This Xanthomonas euvesicatoria pv. vesicatoria (strain 85-10) (Xanthomonas campestris pv. vesicatoria) protein is Protein RecA.